The primary structure comprises 552 residues: uncharacterized protein (552 aa).

The DhaL domain occupies 8–200 (KLFAEMIIQG…LAIVYAGFLK (193 aa)).

This is an uncharacterized protein from Staphylococcus saprophyticus subsp. saprophyticus (strain ATCC 15305 / DSM 20229 / NCIMB 8711 / NCTC 7292 / S-41).